The chain runs to 201 residues: IMP cyclohydrolase (201 aa).

This sequence belongs to the archaeal IMP cyclohydrolase family.

It carries out the reaction IMP + H2O = 5-formamido-1-(5-phospho-D-ribosyl)imidazole-4-carboxamide. Its pathway is purine metabolism; IMP biosynthesis via de novo pathway; IMP from 5-formamido-1-(5-phospho-D-ribosyl)imidazole-4-carboxamide: step 1/1. Functionally, catalyzes the cyclization of 5-formylamidoimidazole-4-carboxamide ribonucleotide to IMP. The sequence is that of IMP cyclohydrolase from Methanocella arvoryzae (strain DSM 22066 / NBRC 105507 / MRE50).